Here is a 904-residue protein sequence, read N- to C-terminus: Anoctamin-5 (904 aa).

At 1-290 (MVEQEGLTAK…HLIRNYFGEK (290 aa)) the chain is on the cytoplasmic side. Residues 291 to 311 (IGIYFVFLGYYTEMLLFAALV) form a helical membrane-spanning segment. Topologically, residues 312–371 (GLACFIYGLLSMENNRTSTEICDPDIGGQMIMCPLCDEVCDYWRLNTTCLHSKFSHLFDN) are extracellular. Asparagine 326, asparagine 357, and asparagine 371 each carry an N-linked (GlcNAc...) asparagine glycan. Residues 372-392 (ESTVFFALFMGIWVTLFLEFW) form a helical membrane-spanning segment. Over 393 to 453 (KQRQARLEYE…CHRIPWYFVS (61 aa)) the chain is Cytoplasmic. Residues 454–474 (GTTVTFGMALLLSSMVSILIY) traverse the membrane as a helical segment. Residues 475–502 (RLSVFATFASFMESEATLQSVKSFFTPQ) are Extracellular-facing. A helical membrane pass occupies residues 503 to 523 (LATALSGSCLNCIVILILNFF). Residues 524 to 548 (YEKISAWITKMEIPRTHQEYESSLT) are Cytoplasmic-facing. Residues 549–569 (LKMFLFQFVNYYSSCFYVAFF) form a helical membrane-spanning segment. The Extracellular segment spans residues 570–667 (KGKFVGYPGS…RGLFYEYLET (98 aa)). Residues 668 to 688 (VIQFGFATLFVASFPLAPLFA) traverse the membrane as a helical segment. Residues 689-723 (LMNNIMGIRVDAWKLTTQYRRPVAAKAHSIGVWQD) are Cytoplasmic-facing. A helical membrane pass occupies residues 724–744 (ILFGMAIVSVATNAFIVSFTS). Residues 745-825 (DIIPRLVYFY…FWHVLAAKMT (81 aa)) are Extracellular-facing. 3 N-linked (GlcNAc...) asparagine glycosylation sites follow: asparagine 759, asparagine 769, and asparagine 782. The helical transmembrane segment at 826-846 (FIIVMEHVVFLFKFLLAWLIP) threads the bilayer. Topologically, residues 847 to 904 (DVPKDVVEKIKREKLMTIKIIHDFELNKLKENLDVEYGNIMKNVLVDEDNSLKAKTTV) are cytoplasmic.

It belongs to the anoctamin family. In terms of tissue distribution, highly expressed in skeletal muscle, bone tissues and thyroid gland.

It localises to the endoplasmic reticulum membrane. The protein localises to the cell membrane. Its function is as follows. Plays a role in plasma membrane repair in a process involving annexins. Does not exhibit calcium-activated chloride channel (CaCC) activity. The protein is Anoctamin-5 (Ano5) of Mus musculus (Mouse).